The following is a 241-amino-acid chain: Alkylated DNA repair protein ALKBH6 homolog (241 aa).

In terms of domain architecture, Fe2OG dioxygenase spans 87–232; it reads AINHVLINEY…RVSLTCRLVP (146 aa). H105, D107, and H181 together coordinate Fe cation. Positions 223 and 229 each coordinate 2-oxoglutarate.

The protein belongs to the alkB family. Fe(2+) is required as a cofactor.

It is found in the nucleus. Its function is as follows. Probable RNA demethylase that binds to both N6-methyladenosine-containing- (m(6)A) and C5-methylcytidine-containing- (m(5)C) RNAs, thus being a probable m(6)A and m(5)C eraser. Involved in responses to abscisic acid (ABA) via the modulation of the expression of ABA signaling-related genes (e.g. ABI3 and ABI4). Acts as a negative regulator during seed germination under abiotic stresses (e.g. salt, cold and ABA). Positive modulator of seedling growth and survival in response to drought and heat, but counteracts tolerance to salt. This is Alkylated DNA repair protein ALKBH6 homolog from Arabidopsis thaliana (Mouse-ear cress).